A 153-amino-acid chain; its full sequence is Superoxide dismutase [Cu-Zn] (153 aa).

His-45, His-47, and His-62 together coordinate Cu cation. Cys-56 and Cys-145 form a disulfide bridge. His-62, His-70, His-79, and Asp-82 together coordinate Zn(2+). His-119 contacts Cu cation.

Belongs to the Cu-Zn superoxide dismutase family. In terms of assembly, homodimer. Requires Cu cation as cofactor. Zn(2+) serves as cofactor.

The protein localises to the cytoplasm. It catalyses the reaction 2 superoxide + 2 H(+) = H2O2 + O2. Functionally, destroys radicals which are normally produced within the cells and which are toxic to biological systems. This chain is Superoxide dismutase [Cu-Zn], found in Drosophila erecta (Fruit fly).